A 191-amino-acid chain; its full sequence is Protein GrpE (191 aa).

Belongs to the GrpE family. As to quaternary structure, homodimer.

The protein resides in the cytoplasm. Participates actively in the response to hyperosmotic and heat shock by preventing the aggregation of stress-denatured proteins, in association with DnaK and GrpE. It is the nucleotide exchange factor for DnaK and may function as a thermosensor. Unfolded proteins bind initially to DnaJ; upon interaction with the DnaJ-bound protein, DnaK hydrolyzes its bound ATP, resulting in the formation of a stable complex. GrpE releases ADP from DnaK; ATP binding to DnaK triggers the release of the substrate protein, thus completing the reaction cycle. Several rounds of ATP-dependent interactions between DnaJ, DnaK and GrpE are required for fully efficient folding. This Helicobacter pylori (strain P12) protein is Protein GrpE.